Reading from the N-terminus, the 711-residue chain is Choline transporter-like protein 2 (711 aa).

Topologically, residues 1 to 33 are cytoplasmic; it reads MGDERPHYYGKHGTPQKYDPTFKGPIYNRGCTD. Residue threonine 14 is modified to Phosphothreonine. A helical transmembrane segment spans residues 34 to 54; that stretch reads VICCVFLLVAIVGYVAVGIIA. The Extracellular segment spans residues 55-232; sequence WTHGDPRKVI…RIFEDYTVSW (178 aa). N-linked (GlcNAc...) asparagine glycosylation is found at asparagine 187 and asparagine 200. The helical transmembrane segment at 233 to 253 threads the bilayer; the sequence is YWIIIGLVIAMAMSLLFIILL. Residues 254–256 are Cytoplasmic-facing; it reads RFL. The chain crosses the membrane as a helical span at residues 257–277; the sequence is AGIMVWVMIIMVILVLGYGIF. Over 278-315 the chain is Extracellular; sequence HCYMEYSRLRGEAGSDVSLVDLGFQTDFRVYLHLRQTW. A helical membrane pass occupies residues 316–336; sequence LAFMIILSILEVIIILLLIFL. Residues 337-364 lie on the Cytoplasmic side of the membrane; the sequence is RKRILIAIALIKEASRAVGYVMCTMLYP. A helical membrane pass occupies residues 365–385; it reads LVTFFLLCLCIAYWASTAVFL. Topologically, residues 386-440 are extracellular; it reads STSNEAVYKIFDDGLCPFTAKTCNPETFPSSNESRQCPNARCQFAFYGGESGYHR. A glycan (N-linked (GlcNAc...) asparagine) is linked at asparagine 417. Residues 441-461 traverse the membrane as a helical segment; the sequence is ALLGLQIFNAFMFFWLANFVL. At 462 to 504 the chain is on the cytoplasmic side; the sequence is ALGQVTLAGAFASYYWALRKPDDLPAFPLFSAFGRALRYHTGS. The chain crosses the membrane as a helical span at residues 505-525; the sequence is LAFGALILAIVQIIRVILEYL. Over 526–563 the chain is Extracellular; it reads DQRLKAAENKFAKCLMTCLKCCFWCLEKFIKFLNRNAY. A helical transmembrane segment spans residues 564–584; that stretch reads IMIAIYGTNFCTSARNAFFLL. Topologically, residues 585–599 are cytoplasmic; it reads MRNIIRVAVLDKVTD. The helical transmembrane segment at 600 to 620 threads the bilayer; the sequence is FLFLLGKLLIVGSVGILAFFF. At 621–638 the chain is on the extracellular side; the sequence is FTHRIRIVQDTAPPLNYY. The chain crosses the membrane as a helical span at residues 639–659; that stretch reads WVPILTVIVGSYLIAHGFFSV. Over 660 to 711 the chain is Cytoplasmic; it reads YGMCVDTLFLCFCEDLERNDGSQERPYFMSPELRDILLKGSAEEGKRAEAEE.

This sequence belongs to the CTL (choline transporter-like) family. As to quaternary structure, interacts with COCH. N-glycosylated.

It localises to the cell membrane. Its subcellular location is the mitochondrion outer membrane. It carries out the reaction choline(out) + n H(+)(in) = choline(in) + n H(+)(out). The catalysed reaction is ethanolamine(out) + n H(+)(in) = ethanolamine(in) + n H(+)(out). Functionally, choline/H+ antiporter, mainly in mitochodria. Also acts as a low-affinity ethanolamine/H+ antiporter, regulating the supply of extracellular ethanolamine (Etn) for the CDP-Etn pathway, redistribute intracellular Etn and balance the CDP-Cho and CDP-Etn arms of the Kennedy pathway. The chain is Choline transporter-like protein 2 (SLC44A2) from Pongo abelii (Sumatran orangutan).